Here is a 382-residue protein sequence, read N- to C-terminus: Tuliposide A-converting enzyme 2, chloroplastic (382 aa).

Residues 1–74 (MSVASFFSSL…PSPSLSPTPT (74 aa)) constitute a chloroplast transit peptide. The Acyl-ester intermediate role is filled by Ser232. Active-site charge relay system residues include Asp324 and His356.

Belongs to the AB hydrolase superfamily. Homodimer. Expressed in roots, stems, leaves, petals, stamens and pistils, but not in bulb scales.

It localises to the plastid. It is found in the chloroplast. The catalysed reaction is 6-tuliposide A = tulipalin A + D-glucose. Its activity is regulated as follows. Inhibited by NaF, AgNO(3), HgCl(2), CuSO(4) and phenylmethylsulfonyl fluoride (PMSF). In terms of biological role, lactone-forming carboxylesterases, specifically catalyzing intramolecular transesterification, but not hydrolysis. Involved in the biosynthesis of tulipalins, defensive chemicals that show antimicrobial activities against a broad range of strains of bacteria and fungi. Substrates are 6-tuliposide A &gt; 6-tuliposide B. This chain is Tuliposide A-converting enzyme 2, chloroplastic (TCEA2), found in Tulipa gesneriana (Garden tulip).